The chain runs to 231 residues: NADH-ubiquinone oxidoreductase chain 4 (231 aa).

6 consecutive transmembrane segments (helical) span residues Pro-1–Ile-21, Leu-34–Leu-54, Ile-63–Gly-85, Ala-89–Tyr-111, Ile-128–Pro-148, and Leu-156–Ser-176.

It belongs to the complex I subunit 4 family.

It is found in the mitochondrion membrane. It carries out the reaction a ubiquinone + NADH + 5 H(+)(in) = a ubiquinol + NAD(+) + 4 H(+)(out). Its function is as follows. Core subunit of the mitochondrial membrane respiratory chain NADH dehydrogenase (Complex I) that is believed to belong to the minimal assembly required for catalysis. Complex I functions in the transfer of electrons from NADH to the respiratory chain. The immediate electron acceptor for the enzyme is believed to be ubiquinone. This chain is NADH-ubiquinone oxidoreductase chain 4 (MT-ND4), found in Crotalus concolor (Midget faded rattlesnake).